The sequence spans 108 residues: Ig kappa chain V region K-25 (108 aa).

The tract at residues Ala-1–Cys-23 is framework-1. The segment at Gln-24–Ser-34 is complementarity-determining-1. The interval Trp-35–Tyr-49 is framework-2. The complementarity-determining-2 stretch occupies residues Lys-50–Ser-56. Residues Gly-57–Cys-88 form a framework-3 region. Positions Gln-89–Tyr-97 are complementarity-determining-3. The tract at residues Phe-98 to Lys-107 is framework-4.

The sequence is that of Ig kappa chain V region K-25 from Oryctolagus cuniculus (Rabbit).